We begin with the raw amino-acid sequence, 1161 residues long: ATP-dependent helicase/deoxyribonuclease subunit B (1161 aa).

It belongs to the helicase family. AddB/RexB type 2 subfamily. Heterodimer of AddA and RexB. Requires Mg(2+) as cofactor.

The heterodimer acts as both an ATP-dependent DNA helicase and an ATP-dependent, dual-direction single-stranded exonuclease. Recognizes the chi site generating a DNA molecule suitable for the initiation of homologous recombination. This subunit has 5' -&gt; 3' nuclease activity but not helicase activity. The polypeptide is ATP-dependent helicase/deoxyribonuclease subunit B (Oenococcus oeni (strain ATCC BAA-331 / PSU-1)).